Consider the following 539-residue polypeptide: F-box only protein 31 (539 aa).

Residues 11–53 (GPSRGCRRRQQRRGPAETAAADSEPDTDPEEERIEASAGVGGG) form a disordered region. Ser-33 is modified (phosphoserine). Phosphoserine; by PKB/AKT1 is present on Ser-33. Positions 33–43 (SEPDTDPEEER) are enriched in acidic residues. Phosphothreonine is present on Thr-37. The D box motif lies at 64-69 (RCSLLE). The F-box domain occupies 64 to 110 (RCSLLELPPELLVEIFASLPGTDLPSLAQVCTKFRRILHTDTIWRRR). Cys-206, His-214, Cys-230, and His-236 together coordinate Zn(2+). Ser-278 is modified (phosphoserine; by ATM). Positions 297-299 (DDL) match the DDL motif motif. Basic and acidic residues predominate over residues 377 to 397 (VRQEQQEGGHEAGEGRGRQGP). Positions 377 to 446 (VRQEQQEGGH…PAQCGQGQPF (70 aa)) are disordered. The residue at position 419 (Thr-419) is a Phosphothreonine; by MTOR. Phosphoserine is present on Ser-480.

Belongs to the FBXO31 family. In terms of assembly, part of a SCF (SKP1-cullin-F-box) protein ligase complex SCF(FBXO31) composed of CUL1, SKP1, RBX1 and FBXO31. Interacts (when phosphorylated at Ser-33) with CDC20, promoting ubiquitination by the APC/C complex. In terms of processing, phosphorylation at Ser-278 by ATM following gamma-irradiation results in its stabilization. Phosphorylation at Thr-419 and Ser-480 in absence of stress promotes its ubiquitination and degradation by the SCF(FBXO46) complex. Phosphorylation at Ser-33 by AKT1 promotes association with CDC20 and ubiquitination by the APC/C complex. Post-translationally, ubiquitinated by the SCF(FBXO46) complex in absence of stress, promoting its degradation. Ubiquitinated by the APC/C complex following phosphorylation at Ser-33, leading to its degradation by the proteasome. In terms of tissue distribution, highly expressed in brain. Expressed at moderate levels in most tissues, except bone marrow.

Its subcellular location is the cytoplasm. The protein resides in the cytoskeleton. It localises to the microtubule organizing center. The protein localises to the centrosome. The protein operates within protein modification; protein ubiquitination. Its function is as follows. Substrate-recognition component of the SCF(FBXO31) protein ligase complex, which specifically mediates the ubiquitination of proteins amidated at their C-terminus in response to oxidative stress, leading to their degradation by the proteasome. FBXO31 specifically recognizes and binds C-terminal peptides bearing an amide: C-terminal amidation in response to oxidative stress takes place following protein fragmentation. The SCF(FBXO31) also plays a role in G1 arrest following DNA damage by mediating ubiquitination of phosphorylated cyclin-D1 (CCND1), promoting its degradation by the proteasome, resulting in G1 arrest. The SCF(FBXO31) complex is however not a major regulator of CCND1 stability during the G1/S transition. In response to genotoxic stress, the SCF(FBXO31) complex directs ubiquitination and degradation of phosphorylated MDM2, thereby promoting p53/TP53-mediated DNA damage response. SCF(FBXO31) complex is required for genomic integrity by catalyzing ubiquitination and degradation of cyclin-A (CCNA1 and/or CCNA2) during the G1 phase. In response to genotoxic stress, the SCF(FBXO31) complex directs ubiquitination and degradation of phosphorylated FBXO46 and MAP2K6. SCF(FBXO31) complex promotes ubiquitination and degradation of CDT1 during the G2 phase to prevent re-replication. The SCF(FBXO31) complex also mediates ubiquitination and degradation of DUSP6, OGT and PARD6A. The chain is F-box only protein 31 from Homo sapiens (Human).